A 273-amino-acid chain; its full sequence is Glutamate 5-kinase (273 aa).

Lys15 is an ATP binding site. Ser55, Asp142, and Asn158 together coordinate substrate. Residues Ser178–Asp179 and Thr220–Lys226 each bind ATP.

It belongs to the glutamate 5-kinase family.

It localises to the cytoplasm. The catalysed reaction is L-glutamate + ATP = L-glutamyl 5-phosphate + ADP. It functions in the pathway amino-acid biosynthesis; L-proline biosynthesis; L-glutamate 5-semialdehyde from L-glutamate: step 1/2. Catalyzes the transfer of a phosphate group to glutamate to form L-glutamate 5-phosphate. The polypeptide is Glutamate 5-kinase (Streptococcus pyogenes serotype M3 (strain ATCC BAA-595 / MGAS315)).